Consider the following 450-residue polypeptide: UDP-N-acetylmuramoylalanine--D-glutamate ligase (450 aa).

119–125 is an ATP binding site; it reads GTNGKTT.

The protein belongs to the MurCDEF family.

It localises to the cytoplasm. The catalysed reaction is UDP-N-acetyl-alpha-D-muramoyl-L-alanine + D-glutamate + ATP = UDP-N-acetyl-alpha-D-muramoyl-L-alanyl-D-glutamate + ADP + phosphate + H(+). The protein operates within cell wall biogenesis; peptidoglycan biosynthesis. Its function is as follows. Cell wall formation. Catalyzes the addition of glutamate to the nucleotide precursor UDP-N-acetylmuramoyl-L-alanine (UMA). This is UDP-N-acetylmuramoylalanine--D-glutamate ligase from Lactococcus lactis subsp. lactis (strain IL1403) (Streptococcus lactis).